The following is a 476-amino-acid chain: Protein transport protein Sec61 subunit alpha isoform 1 (476 aa).

The Cytoplasmic portion of the chain corresponds to 1–33; sequence MAIKFLEVIKPFCVILPEIQKPERKIQFKEKVL. The helical transmembrane segment at 34-53 threads the bilayer; sequence WTAITLFIFLVCCQIPLFGI. Residues 54–76 are Lumenal-facing; that stretch reads MSSDSADPFYWMRVILASNRGTL. The chain crosses the membrane as a helical span at residues 77 to 96; sequence MELGISPIVTSGLIMQLLAG. Residues 97-117 lie on the Cytoplasmic side of the membrane; the sequence is AKIIEVGDTPKDRALFNGAQK. The chain crosses the membrane as a helical span at residues 118–138; it reads LFGMIITIGQSIVYVMTGMYG. At 139–144 the chain is on the lumenal side; sequence DPSEMG. Residues 145-165 form a helical membrane-spanning segment; that stretch reads AGICLLITIQLFVAGLIVLLL. Residues 166 to 172 lie on the Cytoplasmic side of the membrane; sequence DELLQKG. The helical transmembrane segment at 173 to 193 threads the bilayer; that stretch reads YGLGSGISLFIATNICETIVW. Over 194–240 the chain is Lumenal; it reads KAFSPTTVNTGRGMEFEGAIIALFHLLATRTDKVRALREAFYRQNLP. A helical membrane pass occupies residues 241–261; that stretch reads NLMNLIATIFVFAVVIYFQGF. Topologically, residues 262–288 are cytoplasmic; that stretch reads RVDLPIKSARYRGQYNTYPIKLFYTSN. A helical membrane pass occupies residues 289 to 309; it reads IPIILQSALVSNLYVISQMLS. Residues 310–354 lie on the Lumenal side of the membrane; the sequence is ARFSGNLLVSLLGTWSDTSSGGPARAYPVGGLCYYLSPPESFGSV. A helical membrane pass occupies residues 355–375; sequence LEDPVHAVVYIVFMLGSCAFF. Topologically, residues 376 to 420 are cytoplasmic; that stretch reads SKTWIEVSGSSAKDVAKQLKEQQMVMRGHRETSMVHELNRYIPTA. Residues 421-441 traverse the membrane as a helical segment; that stretch reads AAFGGLCIGALSVLADFLGAI. The Lumenal segment spans residues 442 to 445; the sequence is GSGT. A helical membrane pass occupies residues 446–462; it reads GILLAVTIIYQYFEIFV. Residues 463-476 lie on the Cytoplasmic side of the membrane; the sequence is KEQSEVGSMGALLF.

Belongs to the SecY/SEC61-alpha family. The SEC61 channel-forming translocon complex consists of channel-forming core components SEC61A1, SEC61B and SEC61G and different auxiliary components such as SEC62 and SEC63. The SEC61 channel associates with the multi-pass translocon (MPT) complex. In terms of tissue distribution, expressed in proximal and distal tubules in kidney (at protein level).

The protein resides in the endoplasmic reticulum membrane. Component of SEC61 channel-forming translocon complex that mediates transport of signal peptide-containing precursor polypeptides across the endoplasmic reticulum (ER). Forms a ribosome receptor and a gated pore in the ER membrane, both functions required for cotranslational translocation of nascent polypeptides. May cooperate with auxiliary protein SEC62, SEC63 and HSPA5/BiP to enable post-translational transport of small presecretory proteins. The SEC61 channel is also involved in ER membrane insertion of transmembrane proteins: it mediates membrane insertion of the first few transmembrane segments of proteins, while insertion of subsequent transmembrane regions of multi-pass membrane proteins is mediated by the multi-pass translocon (MPT) complex. The SEC61 channel cooperates with the translocating protein TRAM1 to import nascent proteins into the ER. Controls the passive efflux of calcium ions from the ER lumen to the cytosol through SEC61 channel, contributing to the maintenance of cellular calcium homeostasis. Plays a critical role in nephrogenesis, specifically at pronephros stage. This is Protein transport protein Sec61 subunit alpha isoform 1 (SEC61A1) from Homo sapiens (Human).